Consider the following 146-residue polypeptide: 3-hydroxyacyl-[acyl-carrier-protein] dehydratase FabZ (146 aa).

H49 is a catalytic residue.

The protein belongs to the thioester dehydratase family. FabZ subfamily.

It is found in the cytoplasm. It carries out the reaction a (3R)-hydroxyacyl-[ACP] = a (2E)-enoyl-[ACP] + H2O. In terms of biological role, involved in unsaturated fatty acids biosynthesis. Catalyzes the dehydration of short chain beta-hydroxyacyl-ACPs and long chain saturated and unsaturated beta-hydroxyacyl-ACPs. The chain is 3-hydroxyacyl-[acyl-carrier-protein] dehydratase FabZ from Azotobacter vinelandii (strain DJ / ATCC BAA-1303).